Consider the following 153-residue polypeptide: Large ribosomal subunit protein uL15 (153 aa).

The tract at residues 1-48 (MRLNELSPAPGSKKDRKRVGRGDAGRGNYSGRGMKGQKARSGGATRPG) is disordered.

It belongs to the universal ribosomal protein uL15 family. As to quaternary structure, part of the 50S ribosomal subunit.

Its function is as follows. Binds to the 23S rRNA. The chain is Large ribosomal subunit protein uL15 from Dehalococcoides mccartyi (strain ATCC BAA-2266 / KCTC 15142 / 195) (Dehalococcoides ethenogenes (strain 195)).